We begin with the raw amino-acid sequence, 510 residues long: ETS translocation variant 5 (510 aa).

A disordered region spans residues 131-208 (FKPLTPPTTP…QPLQMPKMMP (78 aa)). The segment covering 161–174 (GHAPAAGPVQGVGP) has biased composition (low complexity). A compositionally biased stretch (pro residues) spans 175–185 (APAPHSLPEPG). S248 carries the post-translational modification Phosphoserine. K350 participates in a covalent cross-link: Glycyl lysine isopeptide (Lys-Gly) (interchain with G-Cter in SUMO2). Residues 368-448 (LQLWQFLVTL…AGERYVYKFV (81 aa)) constitute a DNA-binding region (ETS).

In terms of assembly, interacts (via C-terminal) with ZMYM5 (via N-terminal 120 amino acid region). As to expression, ubiquitous.

It is found in the nucleus. Binds to DNA sequences containing the consensus nucleotide core sequence 5'-GGAA.-3'. The polypeptide is ETS translocation variant 5 (ETV5) (Homo sapiens (Human)).